The following is a 358-amino-acid chain: Peptide chain release factor 1 (358 aa).

The residue at position 233 (Q233) is an N5-methylglutamine.

The protein belongs to the prokaryotic/mitochondrial release factor family. In terms of processing, methylated by PrmC. Methylation increases the termination efficiency of RF1.

It is found in the cytoplasm. In terms of biological role, peptide chain release factor 1 directs the termination of translation in response to the peptide chain termination codons UAG and UAA. The protein is Peptide chain release factor 1 of Blochmanniella floridana.